The following is a 341-amino-acid chain: GDT1-like protein 1, chloroplastic (341 aa).

Low complexity predominate over residues 1–13; it reads MASVASSTVFASS. Disordered regions lie at residues 1-41 and 54-76; these read MASV…GRSV and VVTR…GGGR. The transit peptide at 1 to 57 directs the protein to the chloroplast; sequence MASVASSTVFASSLPHHRATTRAPPTPPRIPRRARLPGRSVVSCLPKRGSEKLVVTR. A run of 7 helical transmembrane segments spans residues 79–99, 117–137, 158–178, 203–223, 246–266, 286–306, and 318–338; these read PSLD…VLML, VVGD…LIFF, AIIF…SVVL, FLAA…AASG, GAGI…VFIA, LGVI…AVLG, and IVAY…LVEI.

Belongs to the GDT1 family.

The protein resides in the plastid. It localises to the chloroplast membrane. The sequence is that of GDT1-like protein 1, chloroplastic from Oryza sativa subsp. japonica (Rice).